The primary structure comprises 132 residues: UPF0299 membrane protein YohJ (132 aa).

The next 4 helical transmembrane spans lie at 8–28 (IWQY…GIFI), 31–51 (LLPV…VLLA), 63–83 (GCYL…VGVM), and 93–113 (FGPV…VVSW).

It belongs to the UPF0299 family.

It localises to the cell inner membrane. This is UPF0299 membrane protein YohJ from Escherichia fergusonii (strain ATCC 35469 / DSM 13698 / CCUG 18766 / IAM 14443 / JCM 21226 / LMG 7866 / NBRC 102419 / NCTC 12128 / CDC 0568-73).